A 306-amino-acid polypeptide reads, in one-letter code: MSTLGHQYDNSLVSNAFGFLRLPMNFQPYDSDADWVITGVPFDMATSGRAGGRHGPAAIRQVSTNLAWEHNRFPWNFDMRERLNVVDCGDLVYAFGDAREMSEKLQAHAEKLLAAGKRMLSFGGDHFVTLPLLRAHAKHFGKMALVHFDAHTDTYANGCEFDHGTMFYTAPKEGLIDPNHSVQIGIRTEFDKDNGFTVLDACQVNDRSVDDVIAQVKQIVGDMPVYLTFDIDCLDPAFAPGTGTPVIGGLTSDRAIKLVRGLKDLNIVGMDVVEVAPAYDQSEITALAAATLALEMLYIQAAKKSE.

Residues H126, D149, H151, D153, D230, and D232 each coordinate Mn(2+).

It belongs to the arginase family. Agmatinase subfamily. It depends on Mn(2+) as a cofactor.

It carries out the reaction agmatine + H2O = urea + putrescine. It participates in amine and polyamine biosynthesis; putrescine biosynthesis via agmatine pathway; putrescine from agmatine: step 1/1. Functionally, catalyzes the formation of putrescine from agmatine. This Shigella dysenteriae serotype 1 (strain Sd197) protein is Agmatinase.